A 379-amino-acid chain; its full sequence is Alpha-humulene synthase eupE (379 aa).

It belongs to the terpene synthase family. Alpha-humulene synthase eupE subfamily. Mg(2+) is required as a cofactor.

The catalysed reaction is (2E,6E)-farnesyl diphosphate = alpha-humulene + diphosphate. It functions in the pathway secondary metabolite biosynthesis; terpenoid biosynthesis. Functionally, alpha-humulene synthase; part of the gene cluster that mediates the biosynthesis of eupenifeldin, a bistropolone meroterpenoid that acts as an antitumor agent. The first step of eupenifeldin biosynthesis is the biosynthesis of 3-methylorcinaldehyde performed by the non-reducing polyketide synthase eupA. Oxidative dearomatization of 3-methylorcinaldehyde likely catalyzed by the FAD-dependent monooxygenase eupB is followed by oxidative ring expansion by the 2-oxoglutarate-dependent dioxygenase eupC to provide the first tropolone metabolite, tropolone stipitaldehyde. In parallel, generation of sesquiterpene alpha-humulene from farnesylpyrophosphate (FPP) is catalyzed by the terpene cyclase eupE. The cytochrome P450 monooxygenase eupD then hydroxylates humulene to humulenol. The putative Diels-Alderase eupF probably catalyzes the formation of the tropolone-humulene skeleton by linking humulenol and the polyketide moiety. The short-chain dehydrogenase/reductase eupG and the flavin-dependent monooxygenase eupH are also essential for eupenifeldin biosynthesis and are likely the additional decorating enzymes of the tropolone-humulene skeleton to produce final eupenifeldin or derivatives. The sequence is that of Alpha-humulene synthase eupE from Phoma sp.